The following is a 445-amino-acid chain: Reticulon-4 receptor-like 1 (445 aa).

Residues 1–24 (MLRKGCCVELLLLLLAGELPLSGG) form the signal peptide. In terms of domain architecture, LRRNT spans 25-54 (CPRDCVCYPSPMTVSCQAHNFAAIPEGIPE). 8 LRR repeats span residues 55–76 (DSER…HFSP), 77–98 (AMVT…TFEG), 101–123 (HLEE…TFQG), 126–147 (KLHA…IFGG), 150–171 (SLQY…IFVD), 174–195 (NLSH…IFRG), 198–219 (NLDR…AFHD), and 222–243 (RLTT…CLAP). Positions 255 to 306 (NAWDCGCRARSLWEWLRRFRGSSSVVPCATPELRQGQDLKSLRVEDFRNCTG) constitute an LRRCT domain. Disordered stretches follow at residues 304 to 380 (CTGP…ELPE) and 401 to 421 (RPKR…SGVQ). Basic residues-rich tracts occupy residues 352–366 (GSKK…HRNR) and 401–413 (RPKR…RRTP). Ser-424 carries the GPI-anchor amidated serine lipid modification. The chain crosses the membrane as a helical span at residues 424 to 444 (SSGTALGVSLLAWILGLVVSL). The propeptide at 425–445 (SGTALGVSLLAWILGLVVSLR) is removed in mature form.

It belongs to the Nogo receptor family. Identified in a complex that contains RTN4R, RTN4RL1 and NGFR; the interaction depends on the presence of chondroitin sulfate proteoglycans. Does not interact with MAG, OMG and RTN4. In terms of tissue distribution, detected in brain (at protein level). Expressed in various regions of the brain, including the cerebral cortex, hippocampus, striatum, thalamus and cerebellum.

It is found in the cell membrane. It localises to the membrane raft. The protein localises to the perikaryon. Its subcellular location is the cell projection. Its function is as follows. Cell surface receptor. Plays a functionally redundant role in postnatal brain development and in regulating axon regeneration in the adult central nervous system. Contributes to normal axon migration across the brain midline and normal formation of the corpus callosum. Protects motoneurons against apoptosis; protection against apoptosis is probably mediated by MAG. Plays a role in inhibiting neurite outgrowth and axon regeneration via its binding to neuronal chondroitin sulfate proteoglycans. Binds heparin. Like other family members, plays a role in restricting the number dendritic spines and the number of synapses that are formed during brain development. Signaling mediates activation of Rho and downstream reorganization of the actin cytoskeleton. The chain is Reticulon-4 receptor-like 1 from Rattus norvegicus (Rat).